Here is a 182-residue protein sequence, read N- to C-terminus: UPF0301 protein CHU_1773 (182 aa).

This sequence belongs to the UPF0301 (AlgH) family.

In Cytophaga hutchinsonii (strain ATCC 33406 / DSM 1761 / CIP 103989 / NBRC 15051 / NCIMB 9469 / D465), this protein is UPF0301 protein CHU_1773.